A 514-amino-acid chain; its full sequence is 2,3-bisphosphoglycerate-independent phosphoglycerate mutase (514 aa).

The Mn(2+) site is built by Asp-14 and Ser-64. Ser-64 serves as the catalytic Phosphoserine intermediate. Residues His-125, 155 to 156 (RD), Arg-187, Arg-193, 263 to 266 (RADR), and Lys-336 contribute to the substrate site. 5 residues coordinate Mn(2+): Asp-403, His-407, Asp-444, His-445, and His-463.

The protein belongs to the BPG-independent phosphoglycerate mutase family. In terms of assembly, monomer. It depends on Mn(2+) as a cofactor.

The enzyme catalyses (2R)-2-phosphoglycerate = (2R)-3-phosphoglycerate. It functions in the pathway carbohydrate degradation; glycolysis; pyruvate from D-glyceraldehyde 3-phosphate: step 3/5. Functionally, catalyzes the interconversion of 2-phosphoglycerate and 3-phosphoglycerate. This Salmonella typhi protein is 2,3-bisphosphoglycerate-independent phosphoglycerate mutase.